A 104-amino-acid chain; its full sequence is Naphthalene 1,2-dioxygenase/salicylate 5-hydroxylase systems, ferredoxin component (104 aa).

Residues 6–101 form the Rieske domain; that stretch reads IDAACLDDIP…VKIENMRVML (96 aa). 4 residues coordinate [2Fe-2S] cluster: C45, H47, C64, and H67.

It belongs to the bacterial ring-hydroxylating dioxygenase ferredoxin component family. In terms of assembly, ferredoxin NagAb belongs to both the salicylate 5-hydroxylase (S5H) and the naphthalene 1,2-dioxygenase (NDO) multicomponent enzyme systems. The NDO multicomponent enzyme system is composed of an electron transfer component and a dioxygenase component (iron sulfur protein (ISP)). The electron transfer component is composed of a ferredoxin reductase (NagAa) and a ferredoxin (NagAb), and the dioxygenase component is formed by a large alpha subunit (NagAc) and a small beta subunit (NagAd). The S5H multicomponent enzyme system is composed of an electron transfer component and a monooxygenase component. The electron transfer component is composed of a ferredoxin reductase (NagAa) and a ferredoxin (NagAb), and the monooxygenase component is formed by a large subunit (NagG) and a small subunit (NagH). [2Fe-2S] cluster serves as cofactor.

Its pathway is aromatic compound metabolism; naphthalene degradation. Its function is as follows. Component of two multicomponent enzyme systems which are involved in the catabolism of naphthalene. Plays a role as an electron transfer component for both salicylate 5-hydroxylase (S5H) and naphthalene 1,2-dioxygenase (NDO) systems, by transferring electrons to the oxygenase components. This is Naphthalene 1,2-dioxygenase/salicylate 5-hydroxylase systems, ferredoxin component from Ralstonia sp.